The sequence spans 571 residues: MRTSKYLLSTLKETPNDAQVVSHQLMLRAGMIRPLASGLYNWLPTGLRVLKKVENIVREEMNKSGAIEVEMPVVQPAELWQESQRWEQYGPELLRFVDRGNRDFVLGPTHEEVITDLVHREVSSYKQLPLNLYQIQTKFRDEVRPRFGVMRGREFLMKDAYSFHTSKECLQNTYDVMYRTYNNIFTRLGLDFRAVQADTGSIGGSASHEFQVLAKSGEDDIVFSSNSDYAANIELAEAVAIGQRQAPSATMELVDTPNAKTINDLVEQFNLSVEKTVKTLIVKGANEGQPLIALIVRGDHELNEVKAQKLPEVADPLEFANEDEIKTKIGASIGSLGPVNLPIPAIIDRSVALMSDFSTGANIDGKHYFNVNWDRDVALPKVADLRNVVEGDPSPDGKGTLQIKRGIEVGHIFQLGTKYSEAMKATVQGEDGRPQTMIMGCYGIGVSRVVAATIEQCHDEKGIIWSSDEIAPFTVAIIPMNMYKSKNVQIFAEELYQSLLNKNVDVIFDDRKERPGVMFADMELIGVPHMIVIGEKNLEKGEIEYKNRRTGEKQIIAKEQVLDFLAQRVNA.

Belongs to the class-II aminoacyl-tRNA synthetase family. ProS type 1 subfamily. In terms of assembly, homodimer.

Its subcellular location is the cytoplasm. The catalysed reaction is tRNA(Pro) + L-proline + ATP = L-prolyl-tRNA(Pro) + AMP + diphosphate. Catalyzes the attachment of proline to tRNA(Pro) in a two-step reaction: proline is first activated by ATP to form Pro-AMP and then transferred to the acceptor end of tRNA(Pro). As ProRS can inadvertently accommodate and process non-cognate amino acids such as alanine and cysteine, to avoid such errors it has two additional distinct editing activities against alanine. One activity is designated as 'pretransfer' editing and involves the tRNA(Pro)-independent hydrolysis of activated Ala-AMP. The other activity is designated 'posttransfer' editing and involves deacylation of mischarged Ala-tRNA(Pro). The misacylated Cys-tRNA(Pro) is not edited by ProRS. The chain is Proline--tRNA ligase from Histophilus somni (strain 129Pt) (Haemophilus somnus).